The sequence spans 780 residues: Reticulon-1 (780 aa).

Disordered regions lie at residues 1 to 76 (MAAP…VAME), 128 to 176 (QKEN…AEST), 201 to 223 (RPQEAKGQEEQHPGLEDKDLDFK), and 293 to 576 (MTAT…IPGP). Residues Ser13 and Ser70 each carry the phosphoserine modification. Residue Ser327 is modified to Phosphoserine. Residues 328-341 (PGSVTPPSSGTEPS) show a composition bias toward low complexity. 3 positions are modified to phosphoserine: Ser350, Ser352, and Ser487. Positions 497-512 (AIREETGSRATEERAP) are enriched in basic and acidic residues. The Reticulon domain maps to 593–780 (AIDLLYWRDI…KIPGAKRHAE (188 aa)). 2 helical membrane passes run 607–627 (IVFGSFLLLLFSLTQFSVVSV) and 709–729 (FAVLMWLLTYVGALFNGLTLL).

As to quaternary structure, interacts with NDRG1. Interacts with BACE1. Interacts with TMEM33.

Its subcellular location is the endoplasmic reticulum membrane. It localises to the golgi apparatus membrane. Its function is as follows. Inhibits amyloid precursor protein processing, probably by blocking BACE1 activity. The chain is Reticulon-1 (Rtn1) from Mus musculus (Mouse).